The sequence spans 319 residues: NADH-quinone oxidoreductase subunit H 2 (319 aa).

Helical transmembrane passes span 1–21 (MIGM…LLVL), 77–97 (ILAP…VAIG), 107–127 (VGLL…VLGA), 147–167 (LAYE…AGSF), 179–199 (VWFV…GIAA), 214–234 (LIAG…FLGE), 238–258 (VLLV…GPWL), 262–282 (VWFG…RATL), and 293–313 (FAWK…GIVV).

This sequence belongs to the complex I subunit 1 family. As to quaternary structure, NDH-1 is composed of 14 different subunits. Subunits NuoA, H, J, K, L, M, N constitute the membrane sector of the complex.

The protein resides in the cell inner membrane. The enzyme catalyses a quinone + NADH + 5 H(+)(in) = a quinol + NAD(+) + 4 H(+)(out). Functionally, NDH-1 shuttles electrons from NADH, via FMN and iron-sulfur (Fe-S) centers, to quinones in the respiratory chain. The immediate electron acceptor for the enzyme in this species is believed to be ubiquinone. Couples the redox reaction to proton translocation (for every two electrons transferred, four hydrogen ions are translocated across the cytoplasmic membrane), and thus conserves the redox energy in a proton gradient. This subunit may bind ubiquinone. The polypeptide is NADH-quinone oxidoreductase subunit H 2 (Rhodopseudomonas palustris (strain ATCC BAA-98 / CGA009)).